A 430-amino-acid polypeptide reads, in one-letter code: MNALNIADYMQTLGLQAKTASAQVARAPAAIKNRALKNLAALLRQNLGSLQAANQRDLERASAAGLAGPLLDRLKLSAKDLETVALGCEQLAAMPDVIGEIIGMKEQPSGIRVGQMRVPIGVFGMIYESRPNVTIEAASLAIKSGNACILRGGSEAIESNKALAALVRQALEQAGLPADAVQLVGTTDREAVGQLIAMPQYVDVIIPRGGKGLIERISRDAKVPVIKHLDGNCHVYVDDPCDIAMAVKIADNAKTQKYSPCNATEGLLVARGVADAFLPQIAAIYAAKGVEMRCDEAAAHILHAHPAIESIANIVPASEQDWYEEYLAPVISIKVVSGVEEAIAHINRYSSHHTDAILTRDHMHAQQFLREVDSASVMVNASTRFADGFEFGLGAEIGISTDKFHARGPVGIEGLTSLKYVVLGQGEVRT.

It belongs to the gamma-glutamyl phosphate reductase family.

Its subcellular location is the cytoplasm. The catalysed reaction is L-glutamate 5-semialdehyde + phosphate + NADP(+) = L-glutamyl 5-phosphate + NADPH + H(+). Its pathway is amino-acid biosynthesis; L-proline biosynthesis; L-glutamate 5-semialdehyde from L-glutamate: step 2/2. In terms of biological role, catalyzes the NADPH-dependent reduction of L-glutamate 5-phosphate into L-glutamate 5-semialdehyde and phosphate. The product spontaneously undergoes cyclization to form 1-pyrroline-5-carboxylate. This is Gamma-glutamyl phosphate reductase from Polaromonas naphthalenivorans (strain CJ2).